The following is a 371-amino-acid chain: Ferrochelatase (371 aa).

Fe cation contacts are provided by His218 and Glu299.

Belongs to the ferrochelatase family.

It is found in the cytoplasm. The enzyme catalyses heme b + 2 H(+) = protoporphyrin IX + Fe(2+). The protein operates within porphyrin-containing compound metabolism; protoheme biosynthesis; protoheme from protoporphyrin-IX: step 1/1. In terms of biological role, catalyzes the ferrous insertion into protoporphyrin IX. This is Ferrochelatase from Cupriavidus taiwanensis (strain DSM 17343 / BCRC 17206 / CCUG 44338 / CIP 107171 / LMG 19424 / R1) (Ralstonia taiwanensis (strain LMG 19424)).